A 168-amino-acid polypeptide reads, in one-letter code: 2-C-methyl-D-erythritol 2,4-cyclodiphosphate synthase (168 aa).

Positions 8 and 10 each coordinate a divalent metal cation. 4-CDP-2-C-methyl-D-erythritol 2-phosphate-binding positions include 8–10 (DLH) and 34–35 (HS). Histidine 42 serves as a coordination point for a divalent metal cation. 4-CDP-2-C-methyl-D-erythritol 2-phosphate contacts are provided by residues 56-58 (DIG), 61-65 (FPDTD), 132-135 (TTTE), and arginine 142.

This sequence belongs to the IspF family. In terms of assembly, homotrimer. A divalent metal cation serves as cofactor.

It carries out the reaction 4-CDP-2-C-methyl-D-erythritol 2-phosphate = 2-C-methyl-D-erythritol 2,4-cyclic diphosphate + CMP. It participates in isoprenoid biosynthesis; isopentenyl diphosphate biosynthesis via DXP pathway; isopentenyl diphosphate from 1-deoxy-D-xylulose 5-phosphate: step 4/6. In terms of biological role, involved in the biosynthesis of isopentenyl diphosphate (IPP) and dimethylallyl diphosphate (DMAPP), two major building blocks of isoprenoid compounds. Catalyzes the conversion of 4-diphosphocytidyl-2-C-methyl-D-erythritol 2-phosphate (CDP-ME2P) to 2-C-methyl-D-erythritol 2,4-cyclodiphosphate (ME-CPP) with a corresponding release of cytidine 5-monophosphate (CMP). In Desulfosudis oleivorans (strain DSM 6200 / JCM 39069 / Hxd3) (Desulfococcus oleovorans), this protein is 2-C-methyl-D-erythritol 2,4-cyclodiphosphate synthase.